Consider the following 141-residue polypeptide: ATP synthase F(0) complex subunit C3, mitochondrial (141 aa).

The N-terminal 66 residues, 1 to 66, are a transit peptide targeting the mitochondrion; the sequence is MFACAKLACT…REFQTTAVNR (66 aa). The chain crosses the membrane as a helical span at residues 82-102; it reads VGVAGSGAGIGTVFGSLIIGY. At Lys109 the chain carries N6,N6,N6-trimethyllysine. Residues 117–137 traverse the membrane as a helical segment; that stretch reads ILGFALSEAMGLFCLMVAFLI.

This sequence belongs to the ATPase C chain family. In terms of assembly, F-type ATPases have 2 components, CF(1) - the catalytic core - and CF(0) - the membrane proton channel. CF(1) has five subunits: alpha(3), beta(3), gamma(1), delta(1), epsilon(1). CF(0) has three main subunits: a, b and c. Interacts with TMEM70 and TMEM242. Trimethylated by ATPSCKMT at Lys-109. Methylation is required for proper incorporation of the C subunit into the ATP synthase complex and mitochondrial respiration.

It localises to the mitochondrion membrane. Its function is as follows. Mitochondrial membrane ATP synthase (F(1)F(0) ATP synthase or Complex V) produces ATP from ADP in the presence of a proton gradient across the membrane which is generated by electron transport complexes of the respiratory chain. F-type ATPases consist of two structural domains, F(1) - containing the extramembraneous catalytic core and F(0) - containing the membrane proton channel, linked together by a central stalk and a peripheral stalk. During catalysis, ATP synthesis in the catalytic domain of F(1) is coupled via a rotary mechanism of the central stalk subunits to proton translocation. Part of the complex F(0) domain. A homomeric c-ring of probably 10 subunits is part of the complex rotary element. The sequence is that of ATP synthase F(0) complex subunit C3, mitochondrial from Bos taurus (Bovine).